A 151-amino-acid polypeptide reads, in one-letter code: UPF0208 membrane protein YfbV (151 aa).

The next 2 helical transmembrane spans lie at 46–65 and 69–91; these read FGIRFMPPLAIFTLTWQIAL and LGPAVATALFACSLPMQGLWWLG.

This sequence belongs to the UPF0208 family.

Its subcellular location is the cell inner membrane. The sequence is that of UPF0208 membrane protein YfbV (yfbV) from Photorhabdus temperata.